Consider the following 52-residue polypeptide: Movement protein TGBp3 (52 aa).

Residues 1 to 3 (MHE) are Lumenal-facing. Residues 4 to 21 (SHLVVILALLLLALWCLS) form a helical membrane-spanning segment. The Cytoplasmic segment spans residues 22–52 (TRPVQPSCHVEINGHSIIVTGNCWHSTQRPH).

The protein belongs to the Tymovirales TGBp3 protein family.

It localises to the host endoplasmic reticulum membrane. Plays a role in viral cell-to-cell propagation, by facilitating genome transport to neighboring plant cells through plasmosdesmata. May induce the formation of granular vesicles derived from the Endoplasmic reticulum, which align on actin filaments. In Foxtail mosaic virus, this protein is Movement protein TGBp3.